The primary structure comprises 242 residues: NH(3)-dependent NAD(+) synthetase (242 aa).

27 to 34 serves as a coordination point for ATP; it reads GISGGIDS. D33 serves as a coordination point for Mg(2+). Deamido-NAD(+) is bound at residue R109. T129 serves as a coordination point for ATP. E134 is a Mg(2+) binding site. Positions 142 and 149 each coordinate deamido-NAD(+). ATP is bound by residues K158 and T180. Position 231–232 (231–232) interacts with deamido-NAD(+); it reads HK.

This sequence belongs to the NAD synthetase family. As to quaternary structure, homodimer.

The catalysed reaction is deamido-NAD(+) + NH4(+) + ATP = AMP + diphosphate + NAD(+) + H(+). It participates in cofactor biosynthesis; NAD(+) biosynthesis; NAD(+) from deamido-NAD(+) (ammonia route): step 1/1. Catalyzes the ATP-dependent amidation of deamido-NAD to form NAD. Uses ammonia as a nitrogen source. This chain is NH(3)-dependent NAD(+) synthetase, found in Thermoplasma volcanium (strain ATCC 51530 / DSM 4299 / JCM 9571 / NBRC 15438 / GSS1).